The following is a 153-amino-acid chain: Large ribosomal subunit protein uL30 (153 aa).

Belongs to the universal ribosomal protein uL30 family. In terms of assembly, part of the 50S ribosomal subunit.

This chain is Large ribosomal subunit protein uL30, found in Methanocella arvoryzae (strain DSM 22066 / NBRC 105507 / MRE50).